The primary structure comprises 381 residues: Chaperone protein DnaJ (381 aa).

The 66-residue stretch at 5–70 (DFYEVLGVSR…QKKAAYDQYG (66 aa)) folds into the J domain. Residues 136 to 214 (GVTKEIEVPT…CHGQGRKQKT (79 aa)) form a CR-type zinc finger. Cysteine 149, cysteine 152, cysteine 166, cysteine 169, cysteine 188, cysteine 191, cysteine 202, and cysteine 205 together coordinate Zn(2+). CXXCXGXG motif repeat units lie at residues 149–156 (CDSCDGSG), 166–173 (CGTCHGHG), 188–195 (CPTCHGKG), and 202–209 (CNECHGQG).

This sequence belongs to the DnaJ family. As to quaternary structure, homodimer. Requires Zn(2+) as cofactor.

The protein resides in the cytoplasm. Participates actively in the response to hyperosmotic and heat shock by preventing the aggregation of stress-denatured proteins and by disaggregating proteins, also in an autonomous, DnaK-independent fashion. Unfolded proteins bind initially to DnaJ; upon interaction with the DnaJ-bound protein, DnaK hydrolyzes its bound ATP, resulting in the formation of a stable complex. GrpE releases ADP from DnaK; ATP binding to DnaK triggers the release of the substrate protein, thus completing the reaction cycle. Several rounds of ATP-dependent interactions between DnaJ, DnaK and GrpE are required for fully efficient folding. Also involved, together with DnaK and GrpE, in the DNA replication of plasmids through activation of initiation proteins. The sequence is that of Chaperone protein DnaJ from Vibrio parahaemolyticus serotype O3:K6 (strain RIMD 2210633).